A 331-amino-acid chain; its full sequence is Ferredoxin--NADP reductase (331 aa).

The FAD site is built by threonine 14, glutamate 33, glutamine 41, tyrosine 46, valine 86, phenylalanine 120, aspartate 284, and serine 327.

It belongs to the ferredoxin--NADP reductase type 2 family. As to quaternary structure, homodimer. It depends on FAD as a cofactor.

It carries out the reaction 2 reduced [2Fe-2S]-[ferredoxin] + NADP(+) + H(+) = 2 oxidized [2Fe-2S]-[ferredoxin] + NADPH. The chain is Ferredoxin--NADP reductase from Picrophilus torridus (strain ATCC 700027 / DSM 9790 / JCM 10055 / NBRC 100828 / KAW 2/3).